The primary structure comprises 62 residues: DNA gyrase inhibitor YacG (62 aa).

Residues cysteine 9, cysteine 12, cysteine 27, and cysteine 31 each contribute to the Zn(2+) site. Residues 43–53 (GYRIPGEKAPE) show a composition bias toward basic and acidic residues. The segment at 43-62 (GYRIPGEKAPESGDEEPGDE) is disordered.

The protein belongs to the DNA gyrase inhibitor YacG family. Interacts with GyrB. Zn(2+) serves as cofactor.

Functionally, inhibits all the catalytic activities of DNA gyrase by preventing its interaction with DNA. Acts by binding directly to the C-terminal domain of GyrB, which probably disrupts DNA binding by the gyrase. In Citrifermentans bemidjiense (strain ATCC BAA-1014 / DSM 16622 / JCM 12645 / Bem) (Geobacter bemidjiensis), this protein is DNA gyrase inhibitor YacG.